A 231-amino-acid chain; its full sequence is Orotidine 5'-phosphate decarboxylase (231 aa).

Substrate is bound by residues aspartate 12, lysine 34, 61-70 (DLKFHDIPNT), threonine 120, arginine 181, glutamine 190, glycine 210, and arginine 211. Lysine 63 (proton donor) is an active-site residue.

Belongs to the OMP decarboxylase family. Type 1 subfamily. As to quaternary structure, homodimer.

The catalysed reaction is orotidine 5'-phosphate + H(+) = UMP + CO2. The protein operates within pyrimidine metabolism; UMP biosynthesis via de novo pathway; UMP from orotate: step 2/2. Its function is as follows. Catalyzes the decarboxylation of orotidine 5'-monophosphate (OMP) to uridine 5'-monophosphate (UMP). The sequence is that of Orotidine 5'-phosphate decarboxylase from Alcanivorax borkumensis (strain ATCC 700651 / DSM 11573 / NCIMB 13689 / SK2).